The primary structure comprises 185 residues: Peptidyl-tRNA hydrolase (185 aa).

Position 14 (tyrosine 14) interacts with tRNA. Histidine 19 serves as the catalytic Proton acceptor. Positions 64, 66, and 112 each coordinate tRNA.

This sequence belongs to the PTH family. In terms of assembly, monomer.

The protein localises to the cytoplasm. The catalysed reaction is an N-acyl-L-alpha-aminoacyl-tRNA + H2O = an N-acyl-L-amino acid + a tRNA + H(+). Functionally, hydrolyzes ribosome-free peptidyl-tRNAs (with 1 or more amino acids incorporated), which drop off the ribosome during protein synthesis, or as a result of ribosome stalling. Its function is as follows. Catalyzes the release of premature peptidyl moieties from peptidyl-tRNA molecules trapped in stalled 50S ribosomal subunits, and thus maintains levels of free tRNAs and 50S ribosomes. The protein is Peptidyl-tRNA hydrolase of Pediococcus pentosaceus (strain ATCC 25745 / CCUG 21536 / LMG 10740 / 183-1w).